Here is a 458-residue protein sequence, read N- to C-terminus: Na(+)/H(+) antiporter NhaA (458 aa).

12 helical membrane-spanning segments follow: residues 27 to 47 (FLHV…AALI), 78 to 98 (LHFW…GMEI), 114 to 134 (ILPI…YLSF), 143 to 163 (GWAV…ALLG), 172 to 192 (VILL…IAFF), 201 to 221 (GLAI…IGLA), 222 to 242 (SAWL…ITGV), 249 to 269 (VILG…PLTI), 316 to 336 (PWVA…VSFA), 346 to 366 (FLVV…GIIT), 388 to 408 (ILLI…VSML), and 421 to 441 (IGVL…GLIY).

The protein belongs to the NhaA Na(+)/H(+) (TC 2.A.33) antiporter family.

Its subcellular location is the cell inner membrane. The catalysed reaction is Na(+)(in) + 2 H(+)(out) = Na(+)(out) + 2 H(+)(in). Its function is as follows. Na(+)/H(+) antiporter that extrudes sodium in exchange for external protons. This chain is Na(+)/H(+) antiporter NhaA, found in Bartonella quintana (strain Toulouse) (Rochalimaea quintana).